A 378-amino-acid chain; its full sequence is Spermidine/putrescine import ATP-binding protein PotA (378 aa).

An ABC transporter domain is found at 18–248 (VQLAGIRKCF…PKNLFVAGFI (231 aa)). 50–57 (GPSGCGKT) serves as a coordination point for ATP.

Belongs to the ABC transporter superfamily. Spermidine/putrescine importer (TC 3.A.1.11.1) family. As to quaternary structure, the complex is composed of two ATP-binding proteins (PotA), two transmembrane proteins (PotB and PotC) and a solute-binding protein (PotD).

It is found in the cell inner membrane. The catalysed reaction is ATP + H2O + polyamine-[polyamine-binding protein]Side 1 = ADP + phosphate + polyamineSide 2 + [polyamine-binding protein]Side 1.. Functionally, part of the ABC transporter complex PotABCD involved in spermidine/putrescine import. Responsible for energy coupling to the transport system. This is Spermidine/putrescine import ATP-binding protein PotA from Shigella dysenteriae serotype 1 (strain Sd197).